Here is a 494-residue protein sequence, read N- to C-terminus: Putative glucuronosyltransferase PGSIP7 (494 aa).

The helical transmembrane segment at Gln4–Tyr24 threads the bilayer. Mn(2+) contacts are provided by Asp161 and Asp163. Transmembrane regions (helical) follow at residues Tyr316–Val336, Ala362–Ile382, Leu389–Ala409, Phe410–Val430, and Leu444–Ile464.

This sequence belongs to the glycosyltransferase 8 family. Glycogenin subfamily. The cofactor is Mn(2+).

It localises to the membrane. The protein is Putative glucuronosyltransferase PGSIP7 (PGSIP7) of Arabidopsis thaliana (Mouse-ear cress).